The sequence spans 287 residues: Putative ankyrin repeat protein R791 (287 aa).

7 ANK repeats span residues 40–71, 76–105, 107–134, 135–164, 165–194, 196–224, and 225–254; these read HNFNVLHEVIKRGYVHILKYVDELENLGPLVF, NVHDKLKLACNHDQLPIVKYLVETNSNIET, NDDVIITASFYGRTNIVEYFIKKDIDNK, TIFEALKNACDNGHLETMILLINNGVDIKA, KDNFIIKQAISKGHLNIVKYLVENGATIDI, DDTYIINSAQKGYYKMVEYLVYRGADYRT, and VDDLPIRCALMGGHLDVVKYLQSLGADIEA.

The polypeptide is Putative ankyrin repeat protein R791 (Acanthamoeba polyphaga (Amoeba)).